The following is a 167-amino-acid chain: Dimethylamine corrinoid protein 3 (167 aa).

Positions 1–44 (MNEVGVRFERGKLFLPHVMMAADAMTAGVNALKDLMPEGSASSK) constitute a B12-binding N-terminal domain. One can recognise a B12-binding domain in the interval 45–167 (MGVIVNGTVE…AVTKAKELLA (123 aa)). A methylcob(III)alamin-binding site is contributed by H58.

This sequence belongs to the methylamine corrinoid protein family.

It participates in one-carbon metabolism; methanogenesis from dimethylamine. Its function is as follows. Acts as a methyl group carrier between MtbB and MtbA. The sequence is that of Dimethylamine corrinoid protein 3 (mtbC3) from Methanosarcina mazei (strain ATCC BAA-159 / DSM 3647 / Goe1 / Go1 / JCM 11833 / OCM 88) (Methanosarcina frisia).